The chain runs to 193 residues: nitroreductase FRM2 (193 aa).

This sequence belongs to the nitroreductase family. The cofactor is FMN.

The protein resides in the cytoplasm. Its subcellular location is the nucleus. The catalysed reaction is 4-(hydroxyamino)quinoline N-oxide + 2 NAD(+) + H2O = 4-nitroquinoline N-oxide + 2 NADH + 2 H(+). Functionally, type II nitroreductase, able to reduce 4-nitroquinoline N-oxide (4-NQO) into 4-aminoquinoline-N-oxide (4-AQO) via 4-hydroxyaminoquinoline (4-HAQO), using NADH as reductant. involved in the oxidative stress response. Plays a possible role in the metal stress response. Involved in negative regulation of fatty acid metabolism. The protein is nitroreductase FRM2 of Saccharomyces cerevisiae (strain ATCC 204508 / S288c) (Baker's yeast).